Reading from the N-terminus, the 428-residue chain is Putative UPF0496 protein 5 (428 aa).

The segment covering 1–14 has biased composition (basic residues); the sequence is MGNRHGIMRPRRLA. The tract at residues 1 to 40 is disordered; that stretch reads MGNRHGIMRPRRLASGRSAAAAEEEGEDGEGEPGSYEAAC. Positions 22-31 are enriched in acidic residues; the sequence is AEEEGEDGEG. 2 helical membrane-spanning segments follow: residues 229–249 and 252–272; these read IVFL…AAIA and PVAA…GKWM.

It belongs to the UPF0496 family.

The protein localises to the membrane. This is Putative UPF0496 protein 5 from Oryza sativa subsp. indica (Rice).